The chain runs to 223 residues: Cutinase (223 aa).

The first 19 residues, 1-19 (MKFFAFSMLIGEASPIVLA), serve as a signal peptide directing secretion. A disulfide bridge links cysteine 46 with cysteine 124. Serine 135 serves as the catalytic Nucleophile. Cysteine 185 and cysteine 192 are joined by a disulfide. Residue aspartate 189 is part of the active site. Histidine 202 serves as the catalytic Proton donor/acceptor.

The protein belongs to the cutinase family. In terms of processing, the 2 disulfide bonds play a critical role in holding the catalytic residues in juxta-position; reduction of the disulfide bridges results in the complete inactivation of the enzyme.

It localises to the secreted. The enzyme catalyses cutin + H2O = cutin monomers.. In terms of biological role, catalyzes the hydrolysis of complex carboxylic polyesters found in the cell wall of plants. Degrades cutin, a macromolecule that forms the structure of the plant cuticle. Allows pathogenic fungi to penetrate through the cuticular barrier into the host plant during the initial stage of fungal infection. This is Cutinase (CUT) from Didymella rabiei (Chickpea ascochyta blight fungus).